The sequence spans 337 residues: PHD finger protein 11 (337 aa).

A C2HC pre-PHD-type zinc finger spans residues 42 to 78 (KRICALCPKDLECSVLYFAQSENIAAHENCLLYSSAL). The segment at 108-160 (LKCTFCGKKGATVGCDLKSCFKNYHFFCAKNDHAVLQADGRTGIYKVFCQQHA) adopts a PHD-type zinc-finger fold.

Interacts with BRCA1 and RELA.

The protein resides in the nucleus. Functionally, positive regulator of Th1-type cytokine gene expression. The protein is PHD finger protein 11 (PHF11) of Bos taurus (Bovine).